A 345-amino-acid chain; its full sequence is Phosphoribosylformylglycinamidine cyclo-ligase (345 aa).

The protein belongs to the AIR synthase family.

Its subcellular location is the cytoplasm. It carries out the reaction 2-formamido-N(1)-(5-O-phospho-beta-D-ribosyl)acetamidine + ATP = 5-amino-1-(5-phospho-beta-D-ribosyl)imidazole + ADP + phosphate + H(+). It participates in purine metabolism; IMP biosynthesis via de novo pathway; 5-amino-1-(5-phospho-D-ribosyl)imidazole from N(2)-formyl-N(1)-(5-phospho-D-ribosyl)glycinamide: step 2/2. The sequence is that of Phosphoribosylformylglycinamidine cyclo-ligase from Shewanella frigidimarina (strain NCIMB 400).